Consider the following 516-residue polypeptide: 3-phosphoshikimate 1-carboxyvinyltransferase, chloroplastic (516 aa).

Residues 1–72 (MAQINNMAQG…RISASVATAQ (72 aa)) constitute a chloroplast transit peptide. The 3-phosphoshikimate site is built by lysine 95, serine 96, and arginine 100. Lysine 95 is a binding site for phosphoenolpyruvate. Phosphoenolpyruvate contacts are provided by glycine 173 and arginine 203. 3-phosphoshikimate contacts are provided by serine 250, serine 251, glutamine 252, serine 278, aspartate 403, and lysine 430. A phosphoenolpyruvate-binding site is contributed by glutamine 252. The active-site Proton acceptor is aspartate 403. Residues arginine 434, arginine 476, and lysine 501 each coordinate phosphoenolpyruvate.

Belongs to the EPSP synthase family. Mostly expressed in flower petals, and, to a lower extent, in roots, stems and anthers, but barely in leaves.

The protein resides in the plastid. It localises to the chloroplast. The catalysed reaction is 3-phosphoshikimate + phosphoenolpyruvate = 5-O-(1-carboxyvinyl)-3-phosphoshikimate + phosphate. The protein operates within metabolic intermediate biosynthesis; chorismate biosynthesis; chorismate from D-erythrose 4-phosphate and phosphoenolpyruvate: step 6/7. With respect to regulation, competitively inhibited by glyphosate. Its function is as follows. Catalyzes the transfer of the enolpyruvyl moiety of phosphoenolpyruvate (PEP) to the 5-hydroxyl of shikimate-3-phosphate (S3P) to produce enolpyruvyl shikimate-3-phosphate and inorganic phosphate. Involved in the accumulation of volatile benzoides in flowers, scent attracting pollinators (e.g. the night-active hawkmoth pollinator Manduca sexta). The chain is 3-phosphoshikimate 1-carboxyvinyltransferase, chloroplastic from Petunia hybrida (Petunia).